Reading from the N-terminus, the 173-residue chain is Photosystem I assembly protein Ycf3 (173 aa).

TPR repeat units follow at residues 35–68 (AYVYYRDGLSAQNDGDYAEALENYEESLKLEENP), 72–105 (GETLKNMAIIYMSNGEEDRALATYQKALDENPKQ), and 120–153 (GRTAEEEGRRDDADGWFDQAAEVWTQAVRLNPGG).

It belongs to the Ycf3 family.

The protein resides in the cellular thylakoid membrane. Functionally, essential for the assembly of the photosystem I (PSI) complex. May act as a chaperone-like factor to guide the assembly of the PSI subunits. In Synechococcus sp. (strain WH7803), this protein is Photosystem I assembly protein Ycf3.